The chain runs to 879 residues: DNA replication licensing factor mcm3 (879 aa).

An MCM domain is found at 306-513; the sequence is VFELLSTSLA…KDRALSEHVL (208 aa). 356-363 provides a ligand contact to ATP; that stretch reads GDPSTAKS. An Arginine finger motif is present at residues 488–491; that stretch reads SRFD. The segment at 679–778 is disordered; the sequence is RKKHKKQRLE…STLPATSREL (100 aa). Acidic residues predominate over residues 690–713; it reads GEEFDSEDDNSDDMDIEESEEEMD. Over residues 732–752 the composition is skewed to low complexity; the sequence is TSQSQESGSEIGSSIAGTAGS. Polar residues predominate over residues 754 to 778; that stretch reads NVGTSNTQLSWPSTHSTLPATSREL.

The protein belongs to the MCM family. As to quaternary structure, component of the mcm2-7 complex. The complex forms a toroidal hexameric ring with the proposed subunit order mcm2-mcm6-mcm4-mcm7-mcm3-mcm5. The heterodimers of mcm4/mcm6 and mcm3/mcm5 interact with mcm2 and mcm7.

Its subcellular location is the nucleus. It catalyses the reaction ATP + H2O = ADP + phosphate + H(+). Functionally, acts as a component of the mcm2-7 complex (mcm complex) which is the putative replicative helicase essential for 'once per cell cycle' DNA replication initiation and elongation in eukaryotic cells. The active ATPase sites in the mcm2-7 ring are formed through the interaction surfaces of two neighboring subunits such that a critical structure of a conserved arginine finger motif is provided in trans relative to the ATP-binding site of the Walker A box of the adjacent subunit. The six ATPase active sites, however, are likely to contribute differentially to the complex helicase activity. In Schizosaccharomyces pombe (strain 972 / ATCC 24843) (Fission yeast), this protein is DNA replication licensing factor mcm3 (mcm3).